Consider the following 565-residue polypeptide: Proline--tRNA ligase (565 aa).

It belongs to the class-II aminoacyl-tRNA synthetase family. ProS type 1 subfamily. In terms of assembly, homodimer.

The protein localises to the cytoplasm. The catalysed reaction is tRNA(Pro) + L-proline + ATP = L-prolyl-tRNA(Pro) + AMP + diphosphate. Catalyzes the attachment of proline to tRNA(Pro) in a two-step reaction: proline is first activated by ATP to form Pro-AMP and then transferred to the acceptor end of tRNA(Pro). As ProRS can inadvertently accommodate and process non-cognate amino acids such as alanine and cysteine, to avoid such errors it has two additional distinct editing activities against alanine. One activity is designated as 'pretransfer' editing and involves the tRNA(Pro)-independent hydrolysis of activated Ala-AMP. The other activity is designated 'posttransfer' editing and involves deacylation of mischarged Ala-tRNA(Pro). The misacylated Cys-tRNA(Pro) is not edited by ProRS. This is Proline--tRNA ligase from Bacillus pumilus (strain SAFR-032).